The sequence spans 382 residues: Homoserine O-acetyltransferase (382 aa).

Residues 1–20 (MSTDQSPCPSATGAELLPPP) form a disordered region. The 305-residue stretch at 59–363 (NVVLVEHALT…RDGHDGFLTE (305 aa)) folds into the AB hydrolase-1 domain. Ser164 serves as the catalytic Nucleophile. Substrate is bound at residue Arg234. Catalysis depends on residues Asp327 and His357. Residue Asp358 coordinates substrate.

It belongs to the AB hydrolase superfamily. MetX family. As to quaternary structure, homodimer.

Its subcellular location is the cytoplasm. The enzyme catalyses L-homoserine + acetyl-CoA = O-acetyl-L-homoserine + CoA. It functions in the pathway amino-acid biosynthesis; L-methionine biosynthesis via de novo pathway; O-acetyl-L-homoserine from L-homoserine: step 1/1. Functionally, transfers an acetyl group from acetyl-CoA to L-homoserine, forming acetyl-L-homoserine. The polypeptide is Homoserine O-acetyltransferase (Nocardia farcinica (strain IFM 10152)).